Here is a 151-residue protein sequence, read N- to C-terminus: 1,4-dihydroxy-2-naphthoyl-CoA hydrolase (151 aa).

Aspartate 19 is a catalytic residue.

The protein belongs to the 4-hydroxybenzoyl-CoA thioesterase family. DHNA-CoA hydrolase subfamily.

The enzyme catalyses 1,4-dihydroxy-2-naphthoyl-CoA + H2O = 1,4-dihydroxy-2-naphthoate + CoA + H(+). The protein operates within cofactor biosynthesis; phylloquinone biosynthesis. Its pathway is quinol/quinone metabolism; 1,4-dihydroxy-2-naphthoate biosynthesis; 1,4-dihydroxy-2-naphthoate from chorismate: step 7/7. In terms of biological role, catalyzes the hydrolysis of 1,4-dihydroxy-2-naphthoyl-CoA (DHNA-CoA) to 1,4-dihydroxy-2-naphthoate (DHNA), a reaction involved in phylloquinone (vitamin K1) biosynthesis. The protein is 1,4-dihydroxy-2-naphthoyl-CoA hydrolase of Prochlorococcus marinus (strain MIT 9303).